Here is a 706-residue protein sequence, read N- to C-terminus: Serine/threonine-protein kinase BUR1 (706 aa).

The Protein kinase domain maps to 38–339 (YKPLGKIGEG…AIGGKNHAYF (302 aa)). Residues 44–52 (IGEGTFGEV) and Lys67 contribute to the ATP site. Asp168 serves as the catalytic Proton acceptor. 3 stretches are compositionally biased toward basic and acidic residues: residues 360–523 (LDNH…RDSR), 545–570 (DYDR…DMTR), and 594–623 (DKVE…KSRD). Residues 360-706 (LDNHKRREQE…YGRKRPRIER (347 aa)) are disordered. Positions 625-648 (GPPPGPPLPADGPPPPPSSNPPRP) are enriched in pro residues. Residues 659 to 706 (WRRDSRDRRESRDRDGRDRDGRDRRLSSSRYARDEFDEYGRKRPRIER) show a composition bias toward basic and acidic residues.

It belongs to the protein kinase superfamily. CMGC Ser/Thr protein kinase family. CDC2/CDKX subfamily.

The protein resides in the nucleus. It carries out the reaction L-seryl-[protein] + ATP = O-phospho-L-seryl-[protein] + ADP + H(+). The catalysed reaction is L-threonyl-[protein] + ATP = O-phospho-L-threonyl-[protein] + ADP + H(+). The enzyme catalyses [DNA-directed RNA polymerase] + ATP = phospho-[DNA-directed RNA polymerase] + ADP + H(+). In terms of biological role, serine/threonine-protein kinase involved in transcription regulation. Phosphorylates the UBC2/RAD6 ubiquitin-conjugating enzyme (E2), leading to monoubiquitination of histone H2B and the silencing of telomeric-associated genes. Also required for histone H3 methylation. Necessary for the recovery from pheromone-induced growth arrest in the cell cycle G1 phase. The polypeptide is Serine/threonine-protein kinase BUR1 (BUR1) (Yarrowia lipolytica (strain CLIB 122 / E 150) (Yeast)).